Here is a 494-residue protein sequence, read N- to C-terminus: Solute carrier family 2, facilitated glucose transporter member 3 (494 aa).

Topologically, residues 1–10 are cytoplasmic; it reads MGTTKVTTPL. A helical transmembrane segment spans residues 11-32; it reads IFAISIATIGSFQFGYNTGVIN. Residues 33 to 64 are Extracellular-facing; that stretch reads APEAIIKDFLNYTLEERSETPPSSVLLTSLWS. A glycan (N-linked (GlcNAc...) asparagine) is linked at Asn43. The chain crosses the membrane as a helical span at residues 65–85; that stretch reads LSVAIFSVGGMIGSFSVGLFV. Residues 86–90 lie on the Cytoplasmic side of the membrane; that stretch reads NRFGR. A helical membrane pass occupies residues 91 to 111; sequence RNSMLIVNLLAIAGGCLMGFC. At 112–118 the chain is on the extracellular side; it reads KIAESVE. The helical transmembrane segment at 119-142 threads the bilayer; the sequence is MLILGRLIIGLFCGLCTGFVPMYI. The Cytoplasmic segment spans residues 143–153; sequence GEISPTALRGA. A helical transmembrane segment spans residues 154–174; sequence FGTLNQLGIVIGILVAQIFGL. D-glucose is bound at residue Gln159. Residues 175 to 183 lie on the Extracellular side of the membrane; sequence KVILGTEDL. The helical transmembrane segment at 184–204 threads the bilayer; it reads WPLLLGFTILPAIIQCAALPF. Topologically, residues 205–269 are cytoplasmic; the sequence is CPESPRFLLI…LFRAPNYRQP (65 aa). Thr232 bears the Phosphothreonine mark. Residues 270-290 traverse the membrane as a helical segment; the sequence is IIISIMLQLSQQLSGINAVFY. The tract at residues 277 to 279 is important for selectivity against fructose; sequence QLS. D-glucose-binding positions include 280–281 and Asn286; that span reads QQ. Over 291-304 the chain is Extracellular; the sequence is YSTGIFKDAGVQEP. The chain crosses the membrane as a helical span at residues 305–325; the sequence is VYATIGAGVVNTIFTVVSVFL. Residue Asn315 coordinates D-glucose. Topologically, residues 326 to 331 are cytoplasmic; sequence VERAGR. The helical transmembrane segment at 332–352 threads the bilayer; sequence RTLHLIGLGGMAFCSILMTIS. Residues 353–363 are Extracellular-facing; sequence LLLKDNYSWMS. Residues 364–389 traverse the membrane as a helical segment; it reads FICIGAILVFVAFFEIGPGPIPWFIV. D-glucose-binding residues include Glu378 and Trp386. Topologically, residues 390–399 are cytoplasmic; sequence AELFGQGPRP. A helical transmembrane segment spans residues 400–420; that stretch reads AAMAVAGCSNWTSNFLVGLLF. The Extracellular segment spans residues 421 to 429; the sequence is PSATFYLGA. A helical transmembrane segment spans residues 430 to 450; that stretch reads YVFIVFTVFLVIFWVFTFFKV. The Cytoplasmic portion of the chain corresponds to 451 to 494; the sequence is PETRGRTFEEITRAFEGQVQTGTRGEKGPIMEMNSIQPTKDTNA. The segment at 473-494 is disordered; the sequence is TRGEKGPIMEMNSIQPTKDTNA. The segment covering 484-494 has biased composition (polar residues); it reads NSIQPTKDTNA. A Phosphoserine modification is found at Ser485. The residue at position 492 (Thr492) is a Phosphothreonine.

Belongs to the major facilitator superfamily. Sugar transporter (TC 2.A.1.1) family. Glucose transporter subfamily. In terms of assembly, interacts with SMIM43; the interaction may promote SLC2A3-mediated glucose transport to meet the energy needs of mesendoderm differentiation. As to expression, detected in placenta.

The protein resides in the cell membrane. Its subcellular location is the perikaryon. It localises to the cell projection. It catalyses the reaction D-glucose(out) = D-glucose(in). The enzyme catalyses D-galactose(in) = D-galactose(out). Deoxyglucose transport is inhibited by D-glucose, D-galactose and maltose. Galactose transport is inhibited by D-glucose and maltose. Functionally, facilitative glucose transporter. Can also mediate the uptake of various other monosaccharides across the cell membrane. Mediates the uptake of glucose, 2-deoxyglucose, galactose, mannose, xylose and fucose, and probably also dehydroascorbate. Does not mediate fructose transport. Required for mesendoderm differentiation. This Ovis aries (Sheep) protein is Solute carrier family 2, facilitated glucose transporter member 3.